The sequence spans 277 residues: N-acetylmuramic acid 6-phosphate etherase (277 aa).

In terms of domain architecture, SIS spans isoleucine 53 to arginine 216. Glutamate 81 (proton donor) is an active-site residue. The active site involves glutamate 112.

This sequence belongs to the GCKR-like family. MurNAc-6-P etherase subfamily. As to quaternary structure, homodimer.

The enzyme catalyses N-acetyl-D-muramate 6-phosphate + H2O = N-acetyl-D-glucosamine 6-phosphate + (R)-lactate. It participates in amino-sugar metabolism; N-acetylmuramate degradation. In terms of biological role, specifically catalyzes the cleavage of the D-lactyl ether substituent of MurNAc 6-phosphate, producing GlcNAc 6-phosphate and D-lactate. This Bacteroides thetaiotaomicron (strain ATCC 29148 / DSM 2079 / JCM 5827 / CCUG 10774 / NCTC 10582 / VPI-5482 / E50) protein is N-acetylmuramic acid 6-phosphate etherase.